The sequence spans 617 residues: KIF-binding protein (617 aa).

A disordered region spans residues 48-83; sequence ALLGPAPEDEDEPAADDGPGDQALGAGEPREAEGPG. Residues 54–66 show a composition bias toward acidic residues; sequence PEDEDEPAADDGP. A Phosphoserine modification is found at S174.

The protein belongs to the KIF-binding protein family. As to quaternary structure, interacts with KIF1B; positively regulates KIF1B microtubule motor activity. Interacts with STMN2. As to expression, in the embryo it is expressed in cortical neurons; expression increases during neuronal development.

It is found in the cytoplasm. The protein resides in the cytoskeleton. Its function is as follows. Activator of KIF1B plus-end-directed microtubule motor activity. Required for organization of axonal microtubules, and axonal outgrowth and maintenance during peripheral and central nervous system development. This is KIF-binding protein from Mus musculus (Mouse).